We begin with the raw amino-acid sequence, 247 residues long: DNA repair protein RecO (247 aa).

Belongs to the RecO family.

Involved in DNA repair and RecF pathway recombination. The protein is DNA repair protein RecO of Alkalilimnicola ehrlichii (strain ATCC BAA-1101 / DSM 17681 / MLHE-1).